A 312-amino-acid chain; its full sequence is Ribosomal protein L11 methyltransferase (312 aa).

S-adenosyl-L-methionine-binding residues include Thr-164, Gly-185, Asp-207, and Asn-249.

It belongs to the methyltransferase superfamily. PrmA family.

It is found in the cytoplasm. The enzyme catalyses L-lysyl-[protein] + 3 S-adenosyl-L-methionine = N(6),N(6),N(6)-trimethyl-L-lysyl-[protein] + 3 S-adenosyl-L-homocysteine + 3 H(+). In terms of biological role, methylates ribosomal protein L11. The protein is Ribosomal protein L11 methyltransferase of Clostridium novyi (strain NT).